A 276-amino-acid chain; its full sequence is Ribosomal RNA small subunit methyltransferase A (276 aa).

S-adenosyl-L-methionine contacts are provided by Asn-15, Leu-17, Gly-42, Glu-63, Asp-88, and Asn-111.

It belongs to the class I-like SAM-binding methyltransferase superfamily. rRNA adenine N(6)-methyltransferase family. RsmA subfamily.

Its subcellular location is the cytoplasm. The catalysed reaction is adenosine(1518)/adenosine(1519) in 16S rRNA + 4 S-adenosyl-L-methionine = N(6)-dimethyladenosine(1518)/N(6)-dimethyladenosine(1519) in 16S rRNA + 4 S-adenosyl-L-homocysteine + 4 H(+). In terms of biological role, specifically dimethylates two adjacent adenosines (A1518 and A1519) in the loop of a conserved hairpin near the 3'-end of 16S rRNA in the 30S particle. May play a critical role in biogenesis of 30S subunits. The protein is Ribosomal RNA small subunit methyltransferase A of Geobacter sulfurreducens (strain ATCC 51573 / DSM 12127 / PCA).